A 200-amino-acid chain; its full sequence is 3-isopropylmalate dehydratase small subunit (200 aa).

This sequence belongs to the LeuD family. LeuD type 1 subfamily. As to quaternary structure, heterodimer of LeuC and LeuD.

The enzyme catalyses (2R,3S)-3-isopropylmalate = (2S)-2-isopropylmalate. It participates in amino-acid biosynthesis; L-leucine biosynthesis; L-leucine from 3-methyl-2-oxobutanoate: step 2/4. Catalyzes the isomerization between 2-isopropylmalate and 3-isopropylmalate, via the formation of 2-isopropylmaleate. The sequence is that of 3-isopropylmalate dehydratase small subunit from Vibrio parahaemolyticus serotype O3:K6 (strain RIMD 2210633).